The sequence spans 295 residues: Fructose-bisphosphate aldolase class 1 (295 aa).

Residue Glu-176 is the Proton acceptor of the active site. The active-site Schiff-base intermediate with dihydroxyacetone-P is the Lys-213.

It belongs to the class I fructose-bisphosphate aldolase family.

It carries out the reaction beta-D-fructose 1,6-bisphosphate = D-glyceraldehyde 3-phosphate + dihydroxyacetone phosphate. Its pathway is carbohydrate degradation; glycolysis; D-glyceraldehyde 3-phosphate and glycerone phosphate from D-glucose: step 4/4. This Clostridium beijerinckii (strain ATCC 51743 / NCIMB 8052) (Clostridium acetobutylicum) protein is Fructose-bisphosphate aldolase class 1.